The chain runs to 225 residues: MAIKDWPQGEGPRDKLLQQGAARLSDAELLAVLIRNGISGQNALTTGRLLLSHFGGLRSLMTATEDKVCQIPGVGPVKYAQLQAAAEISKRISRENLQRGQILTNPDLTRDYLMRQLADRSYEVFALLLLDSQHRVIQFVELFRGTIDSASVYPREVVSLVLEKRAAAVIICHNHPSGIAEPSQADRRITERLKNALATIDVSLLDHMVVGDFEIVSFAERGWLN.

The region spanning 102–224 (ILTNPDLTRD…IVSFAERGWL (123 aa)) is the MPN domain. The Zn(2+) site is built by H173, H175, and D186. The short motif at 173–186 (HNHPSGIAEPSQAD) is the JAMM motif element.

The protein belongs to the UPF0758 family.

The chain is UPF0758 protein Sden_0326 from Shewanella denitrificans (strain OS217 / ATCC BAA-1090 / DSM 15013).